We begin with the raw amino-acid sequence, 233 residues long: Probable chemoreceptor glutamine deamidase CheD (233 aa).

This sequence belongs to the CheD family.

The catalysed reaction is L-glutaminyl-[protein] + H2O = L-glutamyl-[protein] + NH4(+). In terms of biological role, probably deamidates glutamine residues to glutamate on methyl-accepting chemotaxis receptors (MCPs), playing an important role in chemotaxis. This Vibrio cholerae serotype O1 (strain ATCC 39315 / El Tor Inaba N16961) protein is Probable chemoreceptor glutamine deamidase CheD.